The following is a 299-amino-acid chain: Taste receptor type 2 member 5 (299 aa).

Position 1 (Met-1) is a topological domain, extracellular. A helical transmembrane segment spans residues 2–22 (LSAGLGLLMLVAVIEFLIGLI). The Cytoplasmic portion of the chain corresponds to 23–45 (GNGILVVWSLREWIRKFSWSSYN). A helical transmembrane segment spans residues 46–66 (LIILGLAGCRFLLQWLIILDL). The Extracellular portion of the chain corresponds to 67–82 (SLFPLFQSSSWLRYLN). Residues 83 to 103 (VFWVLVSQASLWFATFLSVFY) form a helical membrane-spanning segment. The Cytoplasmic segment spans residues 104–127 (CKKITTFDRPAYLWLKQRAYNLSL). A helical membrane pass occupies residues 128 to 148 (WCLLGYFIISLLLTVQVGLTV). At 149–175 (HHPPQGNSSIRYPFEHWQYLYVFQLNS) the chain is on the extracellular side. N-linked (GlcNAc...) asparagine glycosylation is present at Asn-155. The helical transmembrane segment at 176–196 (GSYLPLMVFLVSSGMLIISLY) threads the bilayer. Over 197–223 (THHKKMKVHSAGRRDARAKAHITALKS) the chain is Cytoplasmic. A helical transmembrane segment spans residues 224–244 (LGCFLLLHLVYIVASPFSITS). The Extracellular portion of the chain corresponds to 245–253 (KTYPPDLTS). The chain crosses the membrane as a helical span at residues 254-274 (VFIWETLMAAYPSLHSLMLIM). Residues 275 to 299 (GIPRVKQTCQKILWKTVCARRCWGP) lie on the Cytoplasmic side of the membrane.

This sequence belongs to the G-protein coupled receptor T2R family.

It localises to the membrane. Functionally, receptor that may play a role in the perception of bitterness and is gustducin-linked. May play a role in sensing the chemical composition of the gastrointestinal content. The activity of this receptor may stimulate alpha gustducin, mediate PLC-beta-2 activation and lead to the gating of TRPM5. This chain is Taste receptor type 2 member 5 (TAS2R5), found in Papio hamadryas (Hamadryas baboon).